The sequence spans 431 residues: 5-methylthioadenosine/S-adenosylhomocysteine deaminase (431 aa).

Positions 61 and 63 each coordinate Zn(2+). E90 and H183 together coordinate substrate. A Zn(2+)-binding site is contributed by H210. Residues E213 and D298 each contribute to the substrate site. D298 is a binding site for Zn(2+).

It belongs to the metallo-dependent hydrolases superfamily. MTA/SAH deaminase family. It depends on Zn(2+) as a cofactor.

The enzyme catalyses S-adenosyl-L-homocysteine + H2O + H(+) = S-inosyl-L-homocysteine + NH4(+). It catalyses the reaction S-methyl-5'-thioadenosine + H2O + H(+) = S-methyl-5'-thioinosine + NH4(+). In terms of biological role, catalyzes the deamination of 5-methylthioadenosine and S-adenosyl-L-homocysteine into 5-methylthioinosine and S-inosyl-L-homocysteine, respectively. Is also able to deaminate adenosine. The chain is 5-methylthioadenosine/S-adenosylhomocysteine deaminase from Halobacterium salinarum (strain ATCC 700922 / JCM 11081 / NRC-1) (Halobacterium halobium).